The primary structure comprises 439 residues: 26S rRNA (cytosine-C(5))-methyltransferase nsun-5 (439 aa).

The S-adenosyl-L-methionine site is built by aspartate 266, aspartate 293, and aspartate 313. Cysteine 366 (nucleophile) is an active-site residue.

This sequence belongs to the class I-like SAM-binding methyltransferase superfamily. RsmB/NOP family.

The enzyme catalyses a cytidine in 26S rRNA + S-adenosyl-L-methionine = a 5-methylcytidine in 26S rRNA + S-adenosyl-L-homocysteine + H(+). Functionally, S-adenosyl-L-methionine-dependent methyltransferase which methylates the carbon-5 position of cytosine 2381 to 5-methylcytosine (m5C2381) in 26S rRNA. Plays a role in the production of mature 5S, 5.8S, 18S and 26S rRNAs and promotes the processing of the internally transcribed spacer 2 (ITS2), which separates the 5.8S and 26S rRNAs on large pre-rRNA precursors. May play a role in the translation of leucine and proline codons. May play a role in maintaining ribosomal frameshifting in response to osmotic stress. Not required for global translation. The sequence is that of 26S rRNA (cytosine-C(5))-methyltransferase nsun-5 from Caenorhabditis elegans.